A 438-amino-acid chain; its full sequence is Glycosyl hydrolase family 109 protein (438 aa).

A signal peptide (tat-type signal) is located at residues 1-33 (MDKTSRRDLLKLASLAGIGAGLARSQGSSKSMA). NAD(+) is bound by residues 52-53 (GR), Asp74, 125-128 (WVWH), 145-146 (EV), and Asn174. Substrate-binding positions include Tyr203, Arg221, 233–236 (YPTH), and Tyr315. Tyr233 lines the NAD(+) pocket. The disordered stretch occupies residues 408–438 (GPLSEASVANGSAPQKFPDFTRGKWQTRQPV).

It belongs to the Gfo/Idh/MocA family. Glycosyl hydrolase 109 subfamily. Requires NAD(+) as cofactor. Post-translationally, predicted to be exported by the Tat system. The position of the signal peptide cleavage has not been experimentally proven.

Glycosidase. The chain is Glycosyl hydrolase family 109 protein from Solibacter usitatus (strain Ellin6076).